The following is a 231-amino-acid chain: Adenosine 5'-phosphosulfate reductase (231 aa).

[4Fe-4S] cluster contacts are provided by cysteine 118, cysteine 119, cysteine 201, and cysteine 204. The Nucleophile; cysteine thiosulfonate intermediate role is filled by cysteine 227.

This sequence belongs to the PAPS reductase family. CysH subfamily. It depends on [4Fe-4S] cluster as a cofactor.

It localises to the cytoplasm. The catalysed reaction is [thioredoxin]-disulfide + sulfite + AMP + 2 H(+) = adenosine 5'-phosphosulfate + [thioredoxin]-dithiol. Its pathway is sulfur metabolism; hydrogen sulfide biosynthesis; sulfite from sulfate. In terms of biological role, catalyzes the formation of sulfite from adenosine 5'-phosphosulfate (APS) using thioredoxin as an electron donor. In Halalkalibacterium halodurans (strain ATCC BAA-125 / DSM 18197 / FERM 7344 / JCM 9153 / C-125) (Bacillus halodurans), this protein is Adenosine 5'-phosphosulfate reductase.